The primary structure comprises 381 residues: Cytochrome b (381 aa).

The next 4 membrane-spanning stretches (helical) occupy residues 34–54 (FGSL…FLAM), 78–99 (WLIR…YLHI), 114–134 (WNIG…GYVL), and 179–199 (FFAF…LHFL). Residues histidine 84 and histidine 98 each contribute to the heme b site. Heme b is bound by residues histidine 183 and histidine 197. Histidine 202 contributes to the a ubiquinone binding site. The next 4 membrane-spanning stretches (helical) occupy residues 227–247 (YKDI…VLFL), 289–309 (LGGV…PFLH), 321–341 (LTQL…WIGG), and 348–368 (FIFI…IITP).

Belongs to the cytochrome b family. The cytochrome bc1 complex contains 3 respiratory subunits (MT-CYB, CYC1 and UQCRFS1), 2 core proteins (UQCRC1 and UQCRC2) and probably 6 low-molecular weight proteins. Heme b serves as cofactor.

It localises to the mitochondrion inner membrane. Component of the ubiquinol-cytochrome c reductase complex (complex III or cytochrome b-c1 complex) that is part of the mitochondrial respiratory chain. The b-c1 complex mediates electron transfer from ubiquinol to cytochrome c. Contributes to the generation of a proton gradient across the mitochondrial membrane that is then used for ATP synthesis. This Heterodontus francisci (Horn shark) protein is Cytochrome b (mt-cyb).